The chain runs to 62 residues: Defensin BmKDfsin4 (62 aa).

An N-terminal signal peptide occupies residues 1-24 (MKTIVLLFVLALVFCTLEMGIVEA). Cystine bridges form between cysteine 28–cysteine 49, cysteine 35–cysteine 57, and cysteine 39–cysteine 59.

It belongs to the invertebrate defensin family. Type 2 subfamily.

The protein localises to the secreted. Dual-function peptide with antimicrobial and potassium channel-blocking activities. Shows inhibitory activity against Gram-positive bacteria such as S.aureus, B.subtilis, and M.luteus as well as methicillin-resistant S.aureus (MIC=0.1-20 uM). Does not act on bacteria by disrupting membranes. Also moderately inhibits Kv1.1/KCNA1 (25.2% inhibition at 1 uM), Kv1.2/KCNA2 (30.5% inhibition at 1 uM), and Kv1.3/KCNA3 potassium channels (IC(50)=510.2 nM, 61% inhibition at 1 uM). Inhibits potassium channels by interacting with the pore region. Does not show hemolytic activity. In vitro, dose-dependently decreases the production of Hepatitis B virus (HBV) DNA and HBV viral proteins in both culture medium and cell lysate. The polypeptide is Defensin BmKDfsin4 (Olivierus martensii (Manchurian scorpion)).